The following is a 669-amino-acid chain: uncharacterized protein (669 aa).

12 consecutive transmembrane segments (helical) span residues Pro9–Ala29, Phe48–Val68, Phe87–Gly107, Trp139–Phe159, Ala186–Gly206, Ser224–Ile244, Leu259–Leu279, Trp314–Ala334, Phe345–Gly365, Tyr397–Ile417, Ala444–Leu464, and Met470–Trp490.

The protein belongs to the BCCT transporter (TC 2.A.15) family.

The protein localises to the cell inner membrane. This is an uncharacterized protein from Haemophilus influenzae (strain ATCC 51907 / DSM 11121 / KW20 / Rd).